The primary structure comprises 967 residues: Nonsense-mediated mRNA decay factor SMG8 (967 aa).

Residues 627–702 (LNEGEDADAD…SCPESQSVAS (76 aa)) are disordered. A compositionally biased stretch (acidic residues) spans 628–639 (NEGEDADADADS). Low complexity predominate over residues 643-666 (RSQICSSGQSSRSRSNSSSSDTSS). Over residues 686–702 (ATEALSESCPESQSVAS) the composition is skewed to polar residues.

Belongs to the SMG8 family.

Functionally, involved in nonsense-mediated decay (NMD) of mRNAs containing premature stop codons. Probable component of kinase complex containing nonC and recruited to stalled ribosomes. This chain is Nonsense-mediated mRNA decay factor SMG8, found in Drosophila mojavensis (Fruit fly).